We begin with the raw amino-acid sequence, 299 residues long: NAD kinase (299 aa).

The Proton acceptor role is filled by Asp71. Residues 71 to 72, 145 to 146, Arg173, Asp175, 186 to 191, Ala210, and Gln248 contribute to the NAD(+) site; these read DG, ND, and TAYSLS.

This sequence belongs to the NAD kinase family. The cofactor is a divalent metal cation.

The protein localises to the cytoplasm. The enzyme catalyses NAD(+) + ATP = ADP + NADP(+) + H(+). In terms of biological role, involved in the regulation of the intracellular balance of NAD and NADP, and is a key enzyme in the biosynthesis of NADP. Catalyzes specifically the phosphorylation on 2'-hydroxyl of the adenosine moiety of NAD to yield NADP. The polypeptide is NAD kinase (Bordetella bronchiseptica (strain ATCC BAA-588 / NCTC 13252 / RB50) (Alcaligenes bronchisepticus)).